A 568-amino-acid polypeptide reads, in one-letter code: Natural resistance-associated macrophage protein 2 (568 aa).

Residues 1 to 20 (MVLDPEEKIPDDGASGDHGD) show a composition bias toward basic and acidic residues. The disordered stretch occupies residues 1 to 45 (MVLDPEEKIPDDGASGDHGDSASLGAINPAYSNSSLPHSTGDSEE). Over 1-69 (MVLDPEEKIP…EEYSCFSFRK (69 aa)) the chain is Cytoplasmic. A compositionally biased stretch (polar residues) spans 30–40 (AYSNSSLPHST). Residues 70–90 (LWAFTGPGFLMSIAYLDPGNI) traverse the membrane as a helical segment. At 91–95 (ESDLQ) the chain is on the extracellular side. Residues 96–117 (SGAVAGFKLLWVLLLATIVGLL) traverse the membrane as a helical segment. At 118–154 (LQRLAARLGVVTGLHLAEVCHRQYPKVPRIILWLMVE) the chain is on the cytoplasmic side. A helical transmembrane segment spans residues 155 to 175 (LAIIGSDMQEVIGSAIAINLL). Residues 176–179 (SAGR) lie on the Extracellular side of the membrane. A helical membrane pass occupies residues 180 to 194 (VPLYGGVLITIADTF). Topologically, residues 195–208 (VFLFLDKYGLRKLE) are cytoplasmic. A helical transmembrane segment spans residues 209 to 229 (AFFGFLITIMALTFGYEYVTV). Residues 230-255 (KPSQSQVLRGMFVPSCSGCHTPQVEQ) lie on the Extracellular side of the membrane. The helical transmembrane segment at 256–276 (AVGIVGAVIMPHNMYLHSALV) threads the bilayer. Topologically, residues 277 to 301 (KSRQVNRANKQEVREANKYFFIESC) are cytoplasmic. Residues 302–322 (IALFVSFIINVFVVSVFAEAF) form a helical membrane-spanning segment. Over 323–360 (FEKTNEQVVEVCRNSSSPHADLFPNDNSTLAVDIYKGG) the chain is Extracellular. 2 N-linked (GlcNAc...) asparagine glycosylation sites follow: asparagine 336 and asparagine 349. Residues 361 to 381 (VVLGCYFGPAALYIWAVGILA) traverse the membrane as a helical segment. Residues 382-408 (AGQSSTMTGTYSGQFVMEGFLNLKWSR) are Cytoplasmic-facing. A helical transmembrane segment spans residues 409 to 429 (FARVILTRSIAIIPTLLVAVF). The Extracellular portion of the chain corresponds to 430–440 (QDVEHLTGMND). A helical membrane pass occupies residues 441 to 461 (FLNVLQSLQLPFALIPILTFT). At 462–482 (SLRPVMSEFSNGIGWRIAGGI) the chain is on the cytoplasmic side. A helical transmembrane segment spans residues 483–503 (LVLLVCSINMYFVVVYVQELG). At 504–506 (HVA) the chain is on the extracellular side. The chain crosses the membrane as a helical span at residues 507 to 527 (LYVVAAVVSVAYLGFVFYLGW). Over 528 to 568 (QCLIALGLSFLDCGRSYHLGLTARPEIYLLNTVDAVSLVSR) the chain is Cytoplasmic. The required for early endosome targeting stretch occupies residues 555–559 (YLLNT). Leucine 556, serine 564, and serine 567 each carry phosphoserine.

Belongs to the NRAMP family. In terms of assembly, forms a complex with NDFIP1 and NEDD4L, in cortical neurons, in response to iron and cobalt exposure; this interaction leads to SLC11A2 ubiquitination by NEDD4L and proteasome-dependent degradation. Interacts with NDFIP1, NDFIP2 and WWP2; this interaction leads to SLC11A2 ubiquitination by WWP2 and subsequent proteasome-dependent degradation. Interacts with COX2 and TOM6 at the outer mitochondrion membrane. Interacts with ARRDC1; this interaction regulates the incorporation of SLC11A2 into extracellular vesicles through an ubiquitination-dependent mechanism. Interacts with ARRDC4; controls the incorporation of SLC11A2 into extracellular vesicles through an ubiquitination-dependent mechanism. Post-translationally, ubiquitinated by WWP2. N-glycosylated. In terms of tissue distribution, ubiquitous. Expressed in proximal intestine, kidney and brain.

The protein resides in the golgi apparatus. It localises to the trans-Golgi network membrane. It is found in the early endosome membrane. The protein localises to the recycling endosome membrane. Its subcellular location is the late endosome membrane. The protein resides in the lysosome membrane. It localises to the apical cell membrane. It is found in the mitochondrion outer membrane. The protein localises to the extracellular vesicle membrane. The enzyme catalyses Fe(2+)(in) + H(+)(in) = Fe(2+)(out) + H(+)(out). It carries out the reaction Cd(2+)(out) + H(+)(out) = Cd(2+)(in) + H(+)(in). It catalyses the reaction Co(2+)(out) + H(+)(out) = Co(2+)(in) + H(+)(in). The catalysed reaction is Mn(2+)(in) + H(+)(in) = Mn(2+)(out) + H(+)(out). The enzyme catalyses Zn(2+)(out) + H(+)(out) = Zn(2+)(in) + H(+)(in). It carries out the reaction Ni(2+)(out) + H(+)(out) = Ni(2+)(in) + H(+)(in). It catalyses the reaction H(+)(in) = H(+)(out). The catalysed reaction is Fe(2+)(in) = Fe(2+)(out). Its activity is regulated as follows. Inhibited by 2-(3-carbamimidoylsulfanylmethyl-benzyl)-isothiourea. In terms of biological role, proton-coupled metal ion symporter operating with a proton to metal ion stoichiometry of 1:1. Selectively transports various divalent metal cations, in decreasing affinity: Cd(2+) &gt; Fe(2+) &gt; Co(2+), Mn(2+) &gt;&gt; Zn(2+), Ni(2+), VO(2+). Essential for maintenance of iron homeostasis by modulating intestinal absorption of dietary Fe(2+) and TF-associated endosomal Fe(2+) transport in erythroid precursors and other cells. Enables Fe(2+) and Mn(2+) ion entry into mitochondria, and is thus expected to promote mitochondrial heme synthesis, iron-sulfur cluster biogenesis and antioxidant defense. Can mediate uncoupled fluxes of either protons or metal ions. The polypeptide is Natural resistance-associated macrophage protein 2 (Slc11a2) (Rattus norvegicus (Rat)).